Here is a 780-residue protein sequence, read N- to C-terminus: MKPGATGESDLAEVLPQHKFDSKSLEAYLNQHLSGFGAEREATLTIAQYRAGKSNPTFYLQKGFQTYVLRKKPPGSLLPKAHQIDREFKVQKALFSIGFPVPKPILYCSDTSVIGTEFYVMEHVQGRIFRDLTIPGLSPAERSAIYVATVETLAQLHSLNIQSLQLEGYGIGAGYCKRQVSTWTKQYQAAAHQDIPAMQQLSEWLMKNLPDNDNEENLIHGDFRLDNIVFHPKECRVIAVLDWELSTIGHPLSDLAHFSLFYFWPRTVPMINQGSYSENSGIPSMEELISIYCRCRGINSILPNWNFFLALSYFKMAGIAQGVYSRYLLGNNSSEDSFLFANIVQPLAETGLQLSKRTFSTVLPQIDTTGQLFVQTRKGQEVLIKVKHFMKQHILPAEKEVTEFYVQNENSVDKWGKPLVIDKLKEMAKVEGLWNLFLPAVSGLSHVDYALIAEETGKCFFAPDVFNCQAPDTGNMEVLHLYGSEEQKKQWLEPLLQGNITSCFCMTEPDVASSDATNIECSIQRDEDSYVINGKKWWSSGAGNPKCKIAIVLGRTQNTSLSRHKQHSMILVPMNTPGVKIIRPLSVFGYTDNFHGGHFEIHFNQVRVPATNLILGEGRGFEISQGRLGPGRIHHCMRTVGLAERALQIMCERATQRIAFKKKLYAHEVVAHWIAESRIAIEKIRLLTLKAAHSMDTLGSAGAKKEIAMIKVAAPRAVSKIVDWAIQVCGGAGVSQDYPLANMYAITRVLRLADGPDEVHLSAIATMELRDQAKRLTAKI.

Lysine 177 carries the post-translational modification N6-acetyllysine. Tyrosine 324 carries the post-translational modification Phosphotyrosine. The residue at position 391 (lysine 391) is an N6-succinyllysine. Residues 504–514 (FCMTEPDVASS) and 538–540 (WSS) contribute to the FAD site. A substrate-binding site is contributed by serine 514. Substrate is bound at residue 629–632 (GPGR). FAD is bound by residues arginine 657, glutamine 727, and 727-731 (QVCGG). Glycine 755 is a substrate binding site. 756 to 758 (PDE) provides a ligand contact to FAD.

It belongs to the acyl-CoA dehydrogenase family. In terms of assembly, homodimer. FAD is required as a cofactor. In terms of tissue distribution, widely expressed with highest levels in brain followed by liver, heart and kidney.

It localises to the peroxisome. Its subcellular location is the mitochondrion membrane. It catalyses the reaction a 2,3-saturated acyl-CoA + oxidized [electron-transfer flavoprotein] + H(+) = a (2E)-enoyl-CoA + reduced [electron-transfer flavoprotein]. The catalysed reaction is docosanoyl-CoA + oxidized [electron-transfer flavoprotein] + H(+) = (2E)-docosenoyl-CoA + reduced [electron-transfer flavoprotein]. It carries out the reaction tetracosanoyl-CoA + oxidized [electron-transfer flavoprotein] + H(+) = (2E)-tetracosenoyl-CoA + reduced [electron-transfer flavoprotein]. The enzyme catalyses eicosanoyl-CoA + oxidized [electron-transfer flavoprotein] + H(+) = (2E)-eicosenoyl-CoA + reduced [electron-transfer flavoprotein]. It catalyses the reaction hexacosanoyl-CoA + oxidized [electron-transfer flavoprotein] + H(+) = (2E)-hexacosenoyl-CoA + reduced [electron-transfer flavoprotein]. The catalysed reaction is tricosanoyl-CoA + oxidized [electron-transfer flavoprotein] + H(+) = (2E)-tricosenoyl-CoA + reduced [electron-transfer flavoprotein]. Its pathway is lipid metabolism; fatty acid beta-oxidation. In terms of biological role, acyl-CoA dehydrogenase, that exhibits maximal activity towards saturated C22-CoA. Probably participates in beta-oxydation and energy production but could also play a role in the metabolism of specific fatty acids to control fatty acids composition of cellular lipids in brain. This chain is Acyl-CoA dehydrogenase family member 11 (ACAD11), found in Homo sapiens (Human).